Consider the following 116-residue polypeptide: Phosphoribosyl-ATP pyrophosphatase (116 aa).

It belongs to the PRA-PH family.

The protein resides in the cytoplasm. The catalysed reaction is 1-(5-phospho-beta-D-ribosyl)-ATP + H2O = 1-(5-phospho-beta-D-ribosyl)-5'-AMP + diphosphate + H(+). It functions in the pathway amino-acid biosynthesis; L-histidine biosynthesis; L-histidine from 5-phospho-alpha-D-ribose 1-diphosphate: step 2/9. In Bordetella avium (strain 197N), this protein is Phosphoribosyl-ATP pyrophosphatase.